A 403-amino-acid polypeptide reads, in one-letter code: DNA primase DnaG (403 aa).

In terms of domain architecture, Toprim spans 172-248 (DSVIIVEGRA…HIDYIARAPP (77 aa)). 3 residues coordinate Mg(2+): E178, D222, and D224. The segment at 279-300 (AAGEKTEAPAQPTQQQPPPAEA) is disordered.

Belongs to the archaeal DnaG primase family. As to quaternary structure, forms a ternary complex with MCM helicase and DNA. Component of the archaeal exosome complex. Mg(2+) serves as cofactor.

The enzyme catalyses ssDNA + n NTP = ssDNA/pppN(pN)n-1 hybrid + (n-1) diphosphate.. Its function is as follows. RNA polymerase that catalyzes the synthesis of short RNA molecules used as primers for DNA polymerase during DNA replication. Also part of the exosome, which is a complex involved in RNA degradation. Acts as a poly(A)-binding protein that enhances the interaction between heteromeric, adenine-rich transcripts and the exosome. This Pyrobaculum neutrophilum (strain DSM 2338 / JCM 9278 / NBRC 100436 / V24Sta) (Thermoproteus neutrophilus) protein is DNA primase DnaG.